Here is a 283-residue protein sequence, read N- to C-terminus: Thymidylate synthase (283 aa).

DUMP is bound at residue R22. The Nucleophile role is filled by C160. DUMP-binding positions include R180 to D183, N191, and H221 to Y223. A (6R)-5,10-methylene-5,6,7,8-tetrahydrofolate-binding site is contributed by D183. S282 contributes to the (6R)-5,10-methylene-5,6,7,8-tetrahydrofolate binding site.

This sequence belongs to the thymidylate synthase family. Bacterial-type ThyA subfamily. Homodimer.

Its subcellular location is the cytoplasm. The enzyme catalyses dUMP + (6R)-5,10-methylene-5,6,7,8-tetrahydrofolate = 7,8-dihydrofolate + dTMP. Its pathway is pyrimidine metabolism; dTTP biosynthesis. Functionally, catalyzes the reductive methylation of 2'-deoxyuridine-5'-monophosphate (dUMP) to 2'-deoxythymidine-5'-monophosphate (dTMP) while utilizing 5,10-methylenetetrahydrofolate (mTHF) as the methyl donor and reductant in the reaction, yielding dihydrofolate (DHF) as a by-product. This enzymatic reaction provides an intracellular de novo source of dTMP, an essential precursor for DNA biosynthesis. In Shewanella halifaxensis (strain HAW-EB4), this protein is Thymidylate synthase.